The sequence spans 133 residues: Small ribosomal subunit protein uS9 (133 aa).

A disordered region spans residues 102–133 (KPKGLLTRDPREVERKKYGLKKARRAPQFSKR). Positions 107–118 (LTRDPREVERKK) are enriched in basic and acidic residues. A compositionally biased stretch (basic residues) spans 119–133 (YGLKKARRAPQFSKR).

This sequence belongs to the universal ribosomal protein uS9 family.

This Deinococcus deserti (strain DSM 17065 / CIP 109153 / LMG 22923 / VCD115) protein is Small ribosomal subunit protein uS9.